Reading from the N-terminus, the 208-residue chain is MEWKIESLPVPYDKAMCFMQQRVEGIANKTQDELVWLLEHFPLYTAGTSARSEELLTDSLFPVYSTGRGGKYTYHGPGQRIAYVMMDLKARDKCNVRLYVETLGEWIVKTLKHFSIRSYFNPNLIGVWVNHNGSEKKIAAFGIRIRKWITYHGVSINVFTDLSHYSGIIPCGIKEYGITSLKTLGVNILYEEFDVVLKKEFNKVFCNC.

A BPL/LPL catalytic domain is found at 29–208 (KTQDELVWLL…KEFNKVFCNC (180 aa)). Residues 68-75 (RGGKYTYH), 140-142 (AFG), and 153-155 (GVS) contribute to the substrate site. Catalysis depends on Cys171, which acts as the Acyl-thioester intermediate.

Belongs to the LipB family.

Its subcellular location is the cytoplasm. It catalyses the reaction octanoyl-[ACP] + L-lysyl-[protein] = N(6)-octanoyl-L-lysyl-[protein] + holo-[ACP] + H(+). The protein operates within protein modification; protein lipoylation via endogenous pathway; protein N(6)-(lipoyl)lysine from octanoyl-[acyl-carrier-protein]: step 1/2. Catalyzes the transfer of endogenously produced octanoic acid from octanoyl-acyl-carrier-protein onto the lipoyl domains of lipoate-dependent enzymes. Lipoyl-ACP can also act as a substrate although octanoyl-ACP is likely to be the physiological substrate. The polypeptide is Octanoyltransferase (Ehrlichia ruminantium (strain Gardel)).